An 846-amino-acid polypeptide reads, in one-letter code: Matrin-3 (846 aa).

Ser-2 carries the N-acetylserine modification. The residue at position 3 (Lys-3) is an N6-acetyllysine; alternate. A Glycyl lysine isopeptide (Lys-Gly) (interchain with G-Cter in SUMO2); alternate cross-link involves residue Lys-3. A phosphoserine mark is found at Ser-4, Ser-9, Ser-14, Ser-22, Ser-41, Ser-118, and Ser-126. Residues Lys-132 and Lys-146 each participate in a glycyl lysine isopeptide (Lys-Gly) (interchain with G-Cter in SUMO2) cross-link. 2 disordered regions span residues 147 to 174 (RRRT…YRVP) and 187 to 213 (DSFD…ESGY). Thr-150 is modified (phosphothreonine). Ser-157 bears the Phosphoserine mark. Tyr-158 carries the post-translational modification Phosphotyrosine. Positions 160 to 174 (RDGRSATREPPYRVP) are enriched in basic and acidic residues. Phosphoserine is present on residues Ser-164, Ser-188, and Ser-195. Positions 201 to 213 (DYDHGSRSQESGY) are enriched in basic and acidic residues. Tyr-202 is modified (phosphotyrosine). A phosphoserine mark is found at Ser-206, Ser-208, and Ser-211. Tyr-219 carries the post-translational modification Phosphotyrosine. Ser-234 is modified (phosphoserine). A Glycyl lysine isopeptide (Lys-Gly) (interchain with G-Cter in SUMO2) cross-link involves residue Lys-245. Ser-264 is modified (phosphoserine). A Glycyl lysine isopeptide (Lys-Gly) (interchain with G-Cter in SUMO2) cross-link involves residue Lys-269. Position 275 is a phosphoserine (Ser-275). The disordered stretch occupies residues 342–394 (PFMLQQSTNPAPGILGPPPPSFHLGGPAVGPRGNLGAGNGNLQGPRHMQKGRV). Residues 398 to 473 (RVVHIMDFQR…KPVRVHLSQK (76 aa)) enclose the RRM 1 domain. Residues Lys-478, Lys-487, and Lys-491 each participate in a glycyl lysine isopeptide (Lys-Gly) (interchain with G-Cter in SUMO2) cross-link. Positions 496 to 571 (RVIHLSNLPH…RCVKVDLSEK (76 aa)) constitute an RRM 2 domain. Residues Ser-509 and Ser-511 each carry the phosphoserine modification. Lys-515 is covalently cross-linked (Glycyl lysine isopeptide (Lys-Gly) (interchain with G-Cter in SUMO2)). Lys-522 carries the post-translational modification N6-acetyllysine; alternate. A Glycyl lysine isopeptide (Lys-Gly) (interchain with G-Cter in SUMO2); alternate cross-link involves residue Lys-522. Ser-533 carries the phosphoserine modification. Glycyl lysine isopeptide (Lys-Gly) (interchain with G-Cter in SUMO2) cross-links involve residues Lys-554 and Lys-555. The residue at position 571 (Lys-571) is an N6-acetyllysine. Residues 588-779 (KKDKSRKRSY…EDYTIPDEYR (192 aa)) are disordered. Phosphoserine is present on residues Ser-596, Ser-598, Ser-604, and Ser-606. Over residues 600–642 (DGKESPSDKKSKTDAQKTESPAEGKEQEEKSGEDGEKDTKDDQ) the composition is skewed to basic and acidic residues. Residues Lys-616 and Lys-629 each participate in a glycyl lysine isopeptide (Lys-Gly) (interchain with G-Cter in SUMO2) cross-link. The span at 652 to 664 (ESEDELLVDEEEA) shows a compositional bias: acidic residues. Phosphoserine occurs at positions 653, 670, 672, and 673. Low complexity predominate over residues 665–675 (AALLESGSSVG). Position 678 is a phosphothreonine (Thr-678). Ser-688 carries the post-translational modification Phosphoserine. The span at 688–703 (SDGKKEPSDKAVKKDP) shows a compositional bias: basic and acidic residues. A Nuclear localization signal motif is present at residues 709 to 717 (SKKKLKKVD). Residues Lys-718 and Lys-735 each participate in a glycyl lysine isopeptide (Lys-Gly) (interchain with G-Cter in SUMO2) cross-link. Thr-740 is subject to Phosphothreonine. 2 positions are modified to phosphoserine: Ser-746 and Ser-758. Residues 766-779 (DENKEDYTIPDEYR) are compositionally biased toward basic and acidic residues. Residue Lys-769 forms a Glycyl lysine isopeptide (Lys-Gly) (interchain with G-Cter in SUMO2) linkage. The Matrin-type zinc-finger motif lies at 800 to 831 (FYCKLCSLFYTNEEVAKNTHCSSLPHYQKLKK). The residue at position 835 (Lys-835) is an N6-acetyllysine; alternate. Lys-835 participates in a covalent cross-link: Glycyl lysine isopeptide (Lys-Gly) (interchain with G-Cter in SUMO2); alternate.

In terms of assembly, part of a complex consisting of SFPQ, NONO and MATR3. Interacts with AGO1 and AGO2. Part of a complex composed at least of ASH2L, EMSY, HCFC1, HSPA8, CCAR2, MATR3, MKI67, RBBP5, TUBB2A, WDR5 and ZNF335; this complex may have a histone H3-specific methyltransferase activity. Interacts with TARDBP. Part of the HDP-RNP complex composed of at least HEXIM1, PRKDC, XRCC5, XRCC6, paraspeckle proteins (SFPQ, NONO, PSPC1, RBM14, and MATR3) and NEAT1 RNA. Interacts with FUS. Interacts with IGF2BP1. Interacts with IGF2BP2 and IGF2BP3. Interacts with RBPMS.

It localises to the nucleus matrix. Functionally, may play a role in transcription or may interact with other nuclear matrix proteins to form the internal fibrogranular network. In association with the SFPQ-NONO heteromer may play a role in nuclear retention of defective RNAs. Plays a role in the regulation of DNA virus-mediated innate immune response by assembling into the HDP-RNP complex, a complex that serves as a platform for IRF3 phosphorylation and subsequent innate immune response activation through the cGAS-STING pathway. Binds to N6-methyladenosine (m6A)-containing mRNAs and contributes to MYC stability by binding to m6A-containing MYC mRNAs. May bind to specific miRNA hairpins. This chain is Matrin-3 (Matr3), found in Mus musculus (Mouse).